The primary structure comprises 450 residues: Tubulin alpha chain (450 aa).

Gln11 lines the GTP pocket. N6-acetyllysine is present on Lys40. Residues Glu71, Ser140, Gly144, Thr145, Thr179, Asn206, and Asn228 each coordinate GTP. Glu71 provides a ligand contact to Mg(2+). Glu254 is an active-site residue. Positions 431–450 (DYEEVGTDSVGEEDEEGEEY) are disordered.

This sequence belongs to the tubulin family. As to quaternary structure, dimer of alpha and beta chains. A typical microtubule is a hollow water-filled tube with an outer diameter of 25 nm and an inner diameter of 15 nM. Alpha-beta heterodimers associate head-to-tail to form protofilaments running lengthwise along the microtubule wall with the beta-tubulin subunit facing the microtubule plus end conferring a structural polarity. Microtubules usually have 13 protofilaments but different protofilament numbers can be found in some organisms and specialized cells. It depends on Mg(2+) as a cofactor. Post-translationally, some glutamate residues at the C-terminus are polyglycylated, resulting in polyglycine chains on the gamma-carboxyl group. Glycylation is mainly limited to tubulin incorporated into axonemes (cilia and flagella) whereas glutamylation is prevalent in neuronal cells, centrioles, axonemes, and the mitotic spindle. Both modifications can coexist on the same protein on adjacent residues, and lowering polyglycylation levels increases polyglutamylation, and reciprocally. The precise function of polyglycylation is still unclear. In terms of processing, some glutamate residues at the C-terminus are polyglutamylated, resulting in polyglutamate chains on the gamma-carboxyl group. Polyglutamylation plays a key role in microtubule severing by spastin (SPAST). SPAST preferentially recognizes and acts on microtubules decorated with short polyglutamate tails: severing activity by SPAST increases as the number of glutamates per tubulin rises from one to eight, but decreases beyond this glutamylation threshold. Acetylation of alpha chains at Lys-40 is located inside the microtubule lumen. This modification has been correlated with increased microtubule stability, intracellular transport and ciliary assembly. Post-translationally, undergoes a tyrosination/detyrosination cycle, the cyclic removal and re-addition of a C-terminal tyrosine residue by the enzymes tubulin tyrosine carboxypeptidase (MATCAP, VASH1 or VASH2) and tubulin tyrosine ligase (TTL), respectively. In terms of processing, tyrosination promotes microtubule interaction with CAP-Gly microtubule plus-end tracking proteins. Tyrosinated tubulins regulate the initiation of dynein-driven motility. Detyrosination is involved in metaphase plate congression by guiding chromosomes during mitosis. Detyrosination increases microtubules-dependent mechanotransduction in dystrophic cardiac and skeletal muscle. In cardiomyocytes, detyrosinated microtubules are required to resist to contractile compression during contraction.

It localises to the cytoplasm. Its subcellular location is the cytoskeleton. The catalysed reaction is GTP + H2O = GDP + phosphate + H(+). Its function is as follows. Tubulin is the major constituent of microtubules, a cylinder consisting of laterally associated linear protofilaments composed of alpha- and beta-tubulin heterodimers. Microtubules grow by the addition of GTP-tubulin dimers to the microtubule end, where a stabilizing cap forms. Below the cap, tubulin dimers are in GDP-bound state, owing to GTPase activity of alpha-tubulin. This is Tubulin alpha chain from Oncorhynchus keta (Chum salmon).